The chain runs to 208 residues: GTP cyclohydrolase-2 (208 aa).

Residue 49–53 (RLHSE) coordinates GTP. Zn(2+) contacts are provided by C54, C65, and C67. Residues Q70, 92 to 94 (EGR), and T114 each bind GTP. D126 serves as the catalytic Proton acceptor. The active-site Nucleophile is R128. Residues T149 and K154 each coordinate GTP.

It belongs to the GTP cyclohydrolase II family. Zn(2+) is required as a cofactor.

The catalysed reaction is GTP + 4 H2O = 2,5-diamino-6-hydroxy-4-(5-phosphoribosylamino)-pyrimidine + formate + 2 phosphate + 3 H(+). The protein operates within cofactor biosynthesis; riboflavin biosynthesis; 5-amino-6-(D-ribitylamino)uracil from GTP: step 1/4. Catalyzes the conversion of GTP to 2,5-diamino-6-ribosylamino-4(3H)-pyrimidinone 5'-phosphate (DARP), formate and pyrophosphate. The sequence is that of GTP cyclohydrolase-2 from Azotobacter vinelandii (strain DJ / ATCC BAA-1303).